Reading from the N-terminus, the 367-residue chain is tRNA-specific 2-thiouridylase MnmA (367 aa).

ATP contacts are provided by residues Gly-12–Ser-19 and Met-38. The interval Asn-98–Asp-100 is interaction with target base in tRNA. Cys-103 (nucleophile) is an active-site residue. Cys-103 and Cys-200 are oxidised to a cystine. Gly-128 is an ATP binding site. The interval Lys-150–Gln-152 is interaction with tRNA. Catalysis depends on Cys-200, which acts as the Cysteine persulfide intermediate. The interval Arg-312 to Tyr-313 is interaction with tRNA.

The protein belongs to the MnmA/TRMU family. In terms of assembly, interacts with TusE.

The protein resides in the cytoplasm. It catalyses the reaction S-sulfanyl-L-cysteinyl-[protein] + uridine(34) in tRNA + AH2 + ATP = 2-thiouridine(34) in tRNA + L-cysteinyl-[protein] + A + AMP + diphosphate + H(+). Its function is as follows. Catalyzes the 2-thiolation of uridine at the wobble position (U34) of tRNA(Lys), tRNA(Glu) and tRNA(Gln), leading to the formation of s(2)U34, the first step of tRNA-mnm(5)s(2)U34 synthesis. Sulfur is provided by IscS, via a sulfur-relay system. Binds ATP and its substrate tRNAs. This chain is tRNA-specific 2-thiouridylase MnmA, found in Blochmanniella pennsylvanica (strain BPEN).